Consider the following 151-residue polypeptide: uncharacterized protein (151 aa).

2 consecutive BON domains span residues 2–68 and 78–146; these read DDAA…AVDK and IDSA…RLKH.

This is an uncharacterized protein from Anaplasma centrale.